The primary structure comprises 281 residues: Pantothenate synthetase (281 aa).

30–37 provides a ligand contact to ATP; that stretch reads MGNLHQGH. Catalysis depends on histidine 37, which acts as the Proton donor. (R)-pantoate is bound at residue glutamine 61. Position 61 (glutamine 61) interacts with beta-alanine. 149–152 lines the ATP pocket; that stretch reads GRKD. Glutamine 155 provides a ligand contact to (R)-pantoate. ATP-binding positions include isoleucine 178 and 186–189; that span reads MSSR.

The protein belongs to the pantothenate synthetase family. As to quaternary structure, homodimer.

Its subcellular location is the cytoplasm. The enzyme catalyses (R)-pantoate + beta-alanine + ATP = (R)-pantothenate + AMP + diphosphate + H(+). It participates in cofactor biosynthesis; (R)-pantothenate biosynthesis; (R)-pantothenate from (R)-pantoate and beta-alanine: step 1/1. Its function is as follows. Catalyzes the condensation of pantoate with beta-alanine in an ATP-dependent reaction via a pantoyl-adenylate intermediate. This Shewanella denitrificans (strain OS217 / ATCC BAA-1090 / DSM 15013) protein is Pantothenate synthetase.